We begin with the raw amino-acid sequence, 62 residues long: Large ribosomal subunit protein eL24 (62 aa).

Zn(2+)-binding residues include Cys6, Cys9, Cys32, and Cys36. The C4-type zinc finger occupies 6-36; the sequence is CYFCGQMLEPGTGKLYIKKDGSTYFMCSSKC.

Belongs to the eukaryotic ribosomal protein eL24 family. In terms of assembly, part of the 50S ribosomal subunit. Forms a cluster with proteins L3 and L14. The cofactor is Zn(2+).

In terms of biological role, binds to the 23S rRNA. This is Large ribosomal subunit protein eL24 from Methanosarcina mazei (strain ATCC BAA-159 / DSM 3647 / Goe1 / Go1 / JCM 11833 / OCM 88) (Methanosarcina frisia).